A 525-amino-acid chain; its full sequence is Phosphatidylinositol 4-kinase alpha 2 (525 aa).

Residues 163 to 278 form a pleckstrin homology (PH) domain conferring phosphoinositide binding specificity region; sequence SDVRQHIVDG…VKPQACIFKV (116 aa). Residues 239 to 509 enclose the PI3K/PI4K catalytic domain; that stretch reads VDSGIPLQSA…VCTDAYNKWT (271 aa). Residues 245–251 form a G-loop region; that stretch reads LQSAAKV. Residues 373–381 are catalytic loop; that stretch reads QPKDRHNGN. Positions 392-417 are activation loop; sequence HIDFGFILETSPGGNMRFENAHFKLS.

This sequence belongs to the PI3/PI4-kinase family. Type III PI4K subfamily.

It is found in the membrane. It catalyses the reaction a 1,2-diacyl-sn-glycero-3-phospho-(1D-myo-inositol) + ATP = a 1,2-diacyl-sn-glycero-3-phospho-(1D-myo-inositol 4-phosphate) + ADP + H(+). In terms of biological role, acts on phosphatidylinositol (PtdIns) in the first committed step in the production of the second messenger inositol-1,4,5,-trisphosphate. The polypeptide is Phosphatidylinositol 4-kinase alpha 2 (PI4KA2) (Arabidopsis thaliana (Mouse-ear cress)).